We begin with the raw amino-acid sequence, 416 residues long: Carboxypeptidase B (416 aa).

The N-terminal stretch at 1–15 (MAFLILVTLALASAH) is a signal peptide. The propeptide at 16-109 (YSGEHFEGEK…LEGQFGRQVP (94 aa)) is activation peptide. A Peptidase M14 domain is found at 117-411 (KYNRWETIEA…LAIKHLARYV (295 aa)). H175 and E178 together coordinate Zn(2+). Residues 175-178 (HARE), R233, and 250-251 (TR) contribute to the substrate site. 2 cysteine pairs are disulfide-bonded: C244–C267 and C258–C272. H303 is a binding site for Zn(2+). Residues 304–305 (SY) and Y355 each bind substrate. Catalysis depends on E377, which acts as the Proton donor/acceptor.

The protein belongs to the peptidase M14 family. Requires Zn(2+) as cofactor.

It is found in the secreted. It localises to the zymogen granule lumen. The catalysed reaction is Preferential release of a C-terminal lysine or arginine amino acid.. This Canis lupus familiaris (Dog) protein is Carboxypeptidase B (CPB1).